A 303-amino-acid polypeptide reads, in one-letter code: MSFSSLPTEIQSLLFLTFLTIYLVTLMGNCLIILVTLADPMLHSPMYFFLRNLSFLEIGFNLVIVPKMLGTLLAQDTTISFLGCATQMYFFFFFGVAECFLLATMAYDRYVAICSPLHYPVIMNQRTRAKLAAASWFPGFPVATVQTTWLFSFPFCGTNKVNHFFCDSPPVLRLVCADTALFEIYAIVGTILVVMIPCLLILCSYTHIAAAILKIPSAKGKNKAFSTCSSHLLVVSLFYISLSLTYFRPKSNNSPEGKKLLSLSYTVMTPMLNPIIYSLRNNEVKNALSRTVSKALALRNCIP.

Topologically, residues 1 to 12 (MSFSSLPTEIQS) are extracellular. The helical transmembrane segment at 13-33 (LLFLTFLTIYLVTLMGNCLII) threads the bilayer. The Cytoplasmic portion of the chain corresponds to 34-41 (LVTLADPM). The chain crosses the membrane as a helical span at residues 42–62 (LHSPMYFFLRNLSFLEIGFNL). Over 63–86 (VIVPKMLGTLLAQDTTISFLGCAT) the chain is Extracellular. Cysteines 84 and 176 form a disulfide. Residues 87-107 (QMYFFFFFGVAECFLLATMAY) traverse the membrane as a helical segment. Residues 108 to 126 (DRYVAICSPLHYPVIMNQR) are Cytoplasmic-facing. A helical transmembrane segment spans residues 127–147 (TRAKLAAASWFPGFPVATVQT). Topologically, residues 148–184 (TWLFSFPFCGTNKVNHFFCDSPPVLRLVCADTALFEI) are extracellular. The helical transmembrane segment at 185–204 (YAIVGTILVVMIPCLLILCS) threads the bilayer. Over 205–224 (YTHIAAAILKIPSAKGKNKA) the chain is Cytoplasmic. A helical transmembrane segment spans residues 225 to 245 (FSTCSSHLLVVSLFYISLSLT). The Extracellular segment spans residues 246–258 (YFRPKSNNSPEGK). Residues 259 to 279 (KLLSLSYTVMTPMLNPIIYSL) traverse the membrane as a helical segment. The Cytoplasmic segment spans residues 280 to 301 (RNNEVKNALSRTVSKALALRNC).

This sequence belongs to the G-protein coupled receptor 1 family.

Its subcellular location is the cell membrane. In terms of biological role, odorant receptor. This Homo sapiens (Human) protein is Olfactory receptor 10A2 (OR10A2).